The primary structure comprises 60 residues: Cytotoxin 2 (60 aa).

4 disulfide bridges follow: Cys3/Cys21, Cys14/Cys38, Cys42/Cys53, and Cys54/Cys59.

Belongs to the three-finger toxin family. Short-chain subfamily. Type IA cytotoxin sub-subfamily. Monomer in solution; Homodimer and oligomer in the presence of negatively charged lipids forming a pore with a size ranging between 20 and 30 Angstroms. In terms of tissue distribution, expressed by the venom gland.

The protein localises to the secreted. The protein resides in the target cell membrane. Its function is as follows. This three-finger cytotoxin is a basic protein that interacts and penetrates into the cell membrane, with the tips of all the three loops. Cytotoxins which have a Pro-30 (P-type) interacts with membrane stronger that those which have a 'Ser-28' (S-type). CTII interacts with membrane stronger than CTI. The chain is Cytotoxin 2 from Naja oxiana (Central Asian cobra).